The chain runs to 466 residues: Histidine--tRNA ligase (466 aa).

Belongs to the class-II aminoacyl-tRNA synthetase family. In terms of assembly, homodimer.

It is found in the cytoplasm. It catalyses the reaction tRNA(His) + L-histidine + ATP = L-histidyl-tRNA(His) + AMP + diphosphate + H(+). This chain is Histidine--tRNA ligase (hisS), found in Xylella fastidiosa (strain 9a5c).